We begin with the raw amino-acid sequence, 927 residues long: F-box only protein 11 (927 aa).

The segment at 1 to 132 (MNSVRAANRR…STSTTENFGH (132 aa)) is disordered. Positions 7–16 (ANRRPRRVSR) are enriched in basic residues. A compositionally biased stretch (low complexity) spans 17 to 27 (PRPVQQQQQQP). The span at 28 to 68 (PQQPPPQPPQQQPPQQQPPPPPQQQQQQQPPPPPPPPPPLP) shows a compositional bias: pro residues. Over residues 114–129 (PTKNSMEGASTSTTEN) the composition is skewed to polar residues. One can recognise an F-box domain in the interval 153–199 (QYLQEKLPDEVVLKIFSYLLEQDLCRAACVCKRFSELANDPILWKRL). PbH1 repeat units lie at residues 395 to 417 (GACP…YITD), 418 to 440 (HAQG…WVKN), 441 to 463 (HGNP…FTFD), 464 to 486 (HGMG…EVKA), 487 to 509 (YANP…YVHE), 510 to 532 (KGRG…WITS), 533 to 555 (NSDP…YIFG), 556 to 578 (DGRG…QIRT), 579 to 601 (NSCP…YVHE), 602 to 624 (KGQG…WVTT), 625 to 647 (GSTP…YFYD), 648 to 670 (NGHG…QIRT), 671 to 693 (GSNP…LVYN), 694 to 716 (SGLG…WIKT), 717 to 739 (DSNP…CIFN), 740 to 762 (GGRG…LIST), 763 to 785 (NSHP…EITN), 786 to 808 (HATA…FLAS), and 809 to 830 (GVNV…EKAV). Residues 833-904 (GQCLYKISSY…LSNPCTLAGE (72 aa)) form a UBR-type zinc finger.

Component of the SCF(FBXO11) complex consisting of CUL1, RBX1, SKP1 and FBXO11. Interacts with CIITA. As to expression, isoform 5 is expressed in keratinocytes, fibroblasts and melanocytes.

It is found in the nucleus. The protein localises to the chromosome. The protein operates within protein modification; protein ubiquitination. Its function is as follows. Substrate recognition component of a SCF (SKP1-CUL1-F-box protein) E3 ubiquitin-protein ligase complex which mediates the ubiquitination and subsequent proteasomal degradation of target proteins, such as DTL/CDT2, BCL6, SNAI1 and PRDM1/BLIMP1. The SCF(FBXO11) complex mediates ubiquitination and degradation of BCL6, thereby playing a role in the germinal center B-cells terminal differentiation toward memory B-cells and plasma cells. The SCF(FBXO11) complex also mediates ubiquitination and degradation of DTL, an important step for the regulation of TGF-beta signaling, cell migration and the timing of the cell-cycle progression and exit. The SCF(FBXO11) complex also catalyzes ubiquitination and degradation of GSK3B-phosphorylated SNAI1. Binds to and neddylates phosphorylated p53/TP53, inhibiting its transcriptional activity. Plays a role in the regulatiom of erythropoiesis but not myelopoiesis or megakaryopoiesis. Mechanistically, activates erythroid genes by mediating the degradation of BAHD1, a heterochromatin-associated protein that recruits corepressors to H3K27me3 marks. Participates in macrophage cell death and inflammation in response to bacterial toxins by regulating the expression of complement 5a receptor 1/C5AR1 and IL-1beta. Acts as a critical regulator to determine the level of MHC-II by mediating the recognition of degron at the P/S/T domain of CIITA leading to its ubiquitination and subsequent degradation via the proteasome. Participates in the antiviral repsonse by initiating the activation of TBK1-IRF3-IFN-I axis. Mediates the 'Lys-63'-linked ubiquitination of TRAF3 to strengthen the interaction between TRAF3 and TBK1. The protein is F-box only protein 11 of Homo sapiens (Human).